The primary structure comprises 501 residues: MEFKVNSECSEKQSSDCIVIGIFESGEFSPSAEKVNKISHGYLKGLPQNADLQGKAEQALLLHHVPHVAAERVLLIGCGKEEELDERRYKKLIKKMVNTLKETGAKNVFCYLPELKVKGKDIDWKIRSAIEVIQDALYCFDHYKSTKTLHALNQITFIVTATQTKAAQTAIQEGIALAVGINEAKNLANTPPNICNPAYLNASARKWAEKFKNVRVSVVNEDEMKKLGMNAYLAVGQGSKNESLMSIIEYKSGKIPAGTKPIVLVGKGMTFDSGGISIKPSQNMDEMKYDMCGAATVFGVMNVVAELNLPLYVIGVLAGAENMPGGNAYRPGDILTTLSGQTVEVLNTDAEGRLVLCDALTYVERFDPELVIDIATLTGACVVALGHHMSGLMSNHAPLAEDLLHASEQSGDLAWRLPLGEEYQEQLDSNFADMANIGGRTAGAITAGCFLSRFTHQYHWAHLDIAGTAWRTGKEKGATGRPVALLSQFLLNKALAQKQGA.

2 residues coordinate Mn(2+): Lys-267 and Asp-272. Residue Lys-279 is part of the active site. Residues Asp-290, Asp-349, and Glu-351 each contribute to the Mn(2+) site. Arg-353 is an active-site residue.

The protein belongs to the peptidase M17 family. Mn(2+) is required as a cofactor.

The protein resides in the cytoplasm. It carries out the reaction Release of an N-terminal amino acid, Xaa-|-Yaa-, in which Xaa is preferably Leu, but may be other amino acids including Pro although not Arg or Lys, and Yaa may be Pro. Amino acid amides and methyl esters are also readily hydrolyzed, but rates on arylamides are exceedingly low.. The catalysed reaction is Release of an N-terminal amino acid, preferentially leucine, but not glutamic or aspartic acids.. Presumably involved in the processing and regular turnover of intracellular proteins. Catalyzes the removal of unsubstituted N-terminal amino acids from various peptides. This is Probable cytosol aminopeptidase from Hamiltonella defensa subsp. Acyrthosiphon pisum (strain 5AT).